Here is a 214-residue protein sequence, read N- to C-terminus: Probable nicotinate-nucleotide adenylyltransferase (214 aa).

It belongs to the NadD family.

It catalyses the reaction nicotinate beta-D-ribonucleotide + ATP + H(+) = deamido-NAD(+) + diphosphate. It functions in the pathway cofactor biosynthesis; NAD(+) biosynthesis; deamido-NAD(+) from nicotinate D-ribonucleotide: step 1/1. In terms of biological role, catalyzes the reversible adenylation of nicotinate mononucleotide (NaMN) to nicotinic acid adenine dinucleotide (NaAD). The chain is Probable nicotinate-nucleotide adenylyltransferase from Buchnera aphidicola subsp. Acyrthosiphon pisum (strain 5A).